We begin with the raw amino-acid sequence, 185 residues long: Ribosome-recycling factor (185 aa).

Belongs to the RRF family.

The protein localises to the cytoplasm. Its function is as follows. Responsible for the release of ribosomes from messenger RNA at the termination of protein biosynthesis. May increase the efficiency of translation by recycling ribosomes from one round of translation to another. The chain is Ribosome-recycling factor from Nocardia farcinica (strain IFM 10152).